The primary structure comprises 405 residues: Tryptophan synthase beta chain (405 aa).

Lys-98 bears the N6-(pyridoxal phosphate)lysine mark.

The protein belongs to the TrpB family. In terms of assembly, tetramer of two alpha and two beta chains. The cofactor is pyridoxal 5'-phosphate.

It catalyses the reaction (1S,2R)-1-C-(indol-3-yl)glycerol 3-phosphate + L-serine = D-glyceraldehyde 3-phosphate + L-tryptophan + H2O. The protein operates within amino-acid biosynthesis; L-tryptophan biosynthesis; L-tryptophan from chorismate: step 5/5. In terms of biological role, the beta subunit is responsible for the synthesis of L-tryptophan from indole and L-serine. The polypeptide is Tryptophan synthase beta chain (Xylella fastidiosa (strain M12)).